The sequence spans 102 residues: NADH-quinone oxidoreductase subunit K (102 aa).

3 consecutive transmembrane segments (helical) span residues 5 to 25 (IAHY…GIFL), 31 to 51 (IIIL…FVAF), and 66 to 86 (FILT…VVFF).

The protein belongs to the complex I subunit 4L family. In terms of assembly, NDH-1 is composed of 14 different subunits. Subunits NuoA, H, J, K, L, M, N constitute the membrane sector of the complex.

The protein resides in the cell inner membrane. The catalysed reaction is a quinone + NADH + 5 H(+)(in) = a quinol + NAD(+) + 4 H(+)(out). In terms of biological role, NDH-1 shuttles electrons from NADH, via FMN and iron-sulfur (Fe-S) centers, to quinones in the respiratory chain. The immediate electron acceptor for the enzyme in this species is believed to be ubiquinone. Couples the redox reaction to proton translocation (for every two electrons transferred, four hydrogen ions are translocated across the cytoplasmic membrane), and thus conserves the redox energy in a proton gradient. This chain is NADH-quinone oxidoreductase subunit K, found in Bartonella bacilliformis (strain ATCC 35685 / KC583 / Herrer 020/F12,63).